We begin with the raw amino-acid sequence, 395 residues long: Elongation factor Tu (395 aa).

One can recognise a tr-type G domain in the interval 10 to 204 (KPHVNIGTIG…IVDEYIPTPE (195 aa)). The interval 19–26 (GHVDHGKT) is G1. A GTP-binding site is contributed by 19–26 (GHVDHGKT). Thr-26 provides a ligand contact to Mg(2+). The interval 60-64 (GITIN) is G2. The tract at residues 81 to 84 (DAPG) is G3. Residues 81–85 (DAPGH) and 136–139 (NKAD) contribute to the GTP site. A G4 region spans residues 136 to 139 (NKAD). Positions 174 to 176 (SAL) are G5.

This sequence belongs to the TRAFAC class translation factor GTPase superfamily. Classic translation factor GTPase family. EF-Tu/EF-1A subfamily. In terms of assembly, monomer.

It localises to the cytoplasm. The catalysed reaction is GTP + H2O = GDP + phosphate + H(+). GTP hydrolase that promotes the GTP-dependent binding of aminoacyl-tRNA to the A-site of ribosomes during protein biosynthesis. The protein is Elongation factor Tu of Lactococcus lactis subsp. lactis (strain IL1403) (Streptococcus lactis).